The sequence spans 354 residues: CREB/ATF bZIP transcription factor (354 aa).

3 disordered regions span residues 1–95 (MRHS…PGEE), 113–156 (PRQP…AAEM), and 171–214 (GGCS…RKAA). A Phosphoserine modification is found at Ser50. Low complexity predominate over residues 121–132 (DPGLSSPGPLSS). 2 stretches are compositionally biased toward gly residues: residues 133 to 143 (SGGGSDSGGLW) and 190 to 199 (PGGGGGGGSG). Positions 204–267 (QAATKSPRKA…QALQEESRYL (64 aa)) constitute a bZIP domain. Low complexity predominate over residues 205-214 (AATKSPRKAA). Residues 219–226 (RLNRLKKK) are basic motif. The segment at 232 to 267 (LESRVRGLAAENQELRAENRELGKRVQALQEESRYL) is leucine-zipper. The HCFC1-binding motif (HBM) signature appears at 303-306 (DHDY).

The protein belongs to the bZIP family. ATF subfamily. As to quaternary structure, interacts with HCFC1; the interaction inhibits CREB3 transcriptional activity. Interacts with CREB3; the interaction occurs only in combination with HCFC1. In terms of tissue distribution, in adults, expressed most abundantly in heart, liver and skeletal muscle, moderately abundant in kidney and pancreas, and barely detectable in lung. In fetal tissues, expressed most abundantly in kidney and very low amounts in heart, lung and liver.

Its subcellular location is the nucleus. In terms of biological role, strongly activates transcription when bound to HCFC1. Suppresses the expression of HSV proteins in cells infected with the virus in a HCFC1-dependent manner. Also suppresses the HCFC1-dependent transcriptional activation by CREB3 and reduces the amount of CREB3 in the cell. Able to down-regulate expression of some cellular genes in CREBZF-expressing cells. The chain is CREB/ATF bZIP transcription factor (CREBZF) from Homo sapiens (Human).